Consider the following 127-residue polypeptide: Putative pre-16S rRNA nuclease (127 aa).

Belongs to the YqgF nuclease family.

It is found in the cytoplasm. Could be a nuclease involved in processing of the 5'-end of pre-16S rRNA. The protein is Putative pre-16S rRNA nuclease of Campylobacter jejuni subsp. jejuni serotype O:23/36 (strain 81-176).